Consider the following 212-residue polypeptide: Probable nicotinate-nucleotide adenylyltransferase (212 aa).

The protein belongs to the NadD family.

It carries out the reaction nicotinate beta-D-ribonucleotide + ATP + H(+) = deamido-NAD(+) + diphosphate. Its pathway is cofactor biosynthesis; NAD(+) biosynthesis; deamido-NAD(+) from nicotinate D-ribonucleotide: step 1/1. In terms of biological role, catalyzes the reversible adenylation of nicotinate mononucleotide (NaMN) to nicotinic acid adenine dinucleotide (NaAD). The protein is Probable nicotinate-nucleotide adenylyltransferase of Shewanella sp. (strain MR-4).